The following is a 339-amino-acid chain: MKCVLGVETSCDETAVALYDGERGLLAHRVYSQIAIHAEYGGVVPELASRDHIRKILPLIKAALDDAALSKENIDGIAYTKGPGLIGALMVGASVAKSLAYAWRVPVVGVHHMEAHLMALQLEESRPAYPFIALLVSGGHTMLVHVEQPGRYKILGESVDDAAGEAFDKTAKLLGLPYPGGPALARLAEQGEPKRFIFPRPMVNQPHLNFSFSGLKTHAVNCFKQYGGEEQTRADIACAFENAVVDTLIIKCLRALEKTGINTLVLVGGVAANKKLRERLGQVAVKRAAQIYYPRQEFCTDNGAMVAYTGWLRLNAGEKEDKIIRVKPRWSMAELNIIN.

Residues His-112 and His-116 each contribute to the Fe cation site. Substrate contacts are provided by residues 135 to 139, Asp-168, Gly-181, and Asn-273; that span reads LVSGG. Asp-301 is a Fe cation binding site.

Belongs to the KAE1 / TsaD family. Requires Fe(2+) as cofactor.

The protein localises to the cytoplasm. The catalysed reaction is L-threonylcarbamoyladenylate + adenosine(37) in tRNA = N(6)-L-threonylcarbamoyladenosine(37) in tRNA + AMP + H(+). Functionally, required for the formation of a threonylcarbamoyl group on adenosine at position 37 (t(6)A37) in tRNAs that read codons beginning with adenine. Is involved in the transfer of the threonylcarbamoyl moiety of threonylcarbamoyl-AMP (TC-AMP) to the N6 group of A37, together with TsaE and TsaB. TsaD likely plays a direct catalytic role in this reaction. This is tRNA N6-adenosine threonylcarbamoyltransferase from Coxiella burnetii (strain RSA 493 / Nine Mile phase I).